The primary structure comprises 391 residues: Chorismate synthase (391 aa).

An NADP(+)-binding site is contributed by arginine 48. Residues 126–128, glycine 286, 301–305, and arginine 328 each bind FMN; these read RAS and KPTSS.

Belongs to the chorismate synthase family. The cofactor is FMNH2.

It catalyses the reaction 5-O-(1-carboxyvinyl)-3-phosphoshikimate = chorismate + phosphate. The protein operates within metabolic intermediate biosynthesis; chorismate biosynthesis; chorismate from D-erythrose 4-phosphate and phosphoenolpyruvate: step 7/7. Functionally, catalyzes the anti-1,4-elimination of the C-3 phosphate and the C-6 proR hydrogen from 5-enolpyruvylshikimate-3-phosphate (EPSP) to yield chorismate, which is the branch point compound that serves as the starting substrate for the three terminal pathways of aromatic amino acid biosynthesis. This reaction introduces a second double bond into the aromatic ring system. This chain is Chorismate synthase, found in Saccharolobus islandicus (strain M.16.27) (Sulfolobus islandicus).